The chain runs to 170 residues: Small ribosomal subunit protein bS18c (170 aa).

2 disordered regions span residues 1–60 (MYTS…GPGD) and 149–170 (NRNLRNNNQNLRNNNRNLSSDC). 7 repeats span residues 4–10 (SKQPFLK), 11–17 (SKQPFSK), 18–24 (SEQPFSK), 25–31 (SEQPFRK), 32–38 (SKQTFRK), 39–45 (FKQPFRK), and 46–52 (SKQPFRR). The tract at residues 4–52 (SKQPFLKSKQPFSKSEQPFSKSEQPFRKSKQTFRKFKQPFRKSKQPFRR) is 7 X 7 AA tandem repeats. Polar residues predominate over residues 13-26 (QPFSKSEQPFSKSE). The segment covering 30–55 (RKSKQTFRKFKQPFRKSKQPFRRRPR) has biased composition (basic residues).

It belongs to the bacterial ribosomal protein bS18 family. Part of the 30S ribosomal subunit.

Its subcellular location is the plastid. It is found in the chloroplast. This is Small ribosomal subunit protein bS18c (rps18) from Secale cereale (Rye).